Here is a 458-residue protein sequence, read N- to C-terminus: Argininosuccinate lyase (458 aa).

This sequence belongs to the lyase 1 family. Argininosuccinate lyase subfamily.

Its subcellular location is the cytoplasm. The enzyme catalyses 2-(N(omega)-L-arginino)succinate = fumarate + L-arginine. It participates in amino-acid biosynthesis; L-arginine biosynthesis; L-arginine from L-ornithine and carbamoyl phosphate: step 3/3. This chain is Argininosuccinate lyase, found in Salmonella paratyphi A (strain ATCC 9150 / SARB42).